Consider the following 302-residue polypeptide: Phosphoribosylaminoimidazole-succinocarboxamide synthase (302 aa).

Belongs to the SAICAR synthetase family.

The catalysed reaction is 5-amino-1-(5-phospho-D-ribosyl)imidazole-4-carboxylate + L-aspartate + ATP = (2S)-2-[5-amino-1-(5-phospho-beta-D-ribosyl)imidazole-4-carboxamido]succinate + ADP + phosphate + 2 H(+). It participates in purine metabolism; IMP biosynthesis via de novo pathway; 5-amino-1-(5-phospho-D-ribosyl)imidazole-4-carboxamide from 5-amino-1-(5-phospho-D-ribosyl)imidazole-4-carboxylate: step 1/2. The chain is Phosphoribosylaminoimidazole-succinocarboxamide synthase from Cupriavidus metallidurans (strain ATCC 43123 / DSM 2839 / NBRC 102507 / CH34) (Ralstonia metallidurans).